The following is a 64-amino-acid chain: Prokaryotic ubiquitin-like protein Pup (64 aa).

Residues 20–58 (QELTLAASHVVSDVSEVDDLLDEIDGLLAENAEDFVTGF) are ARC ATPase binding. E64 is covalently cross-linked (Isoglutamyl lysine isopeptide (Glu-Lys) (interchain with K-? in acceptor proteins)).

It belongs to the prokaryotic ubiquitin-like protein family. As to quaternary structure, strongly interacts with the proteasome-associated ATPase ARC through a hydrophobic interface; the interacting region of Pup lies in its C-terminal half. There is one Pup binding site per ARC hexamer ring.

Its pathway is protein degradation; proteasomal Pup-dependent pathway. In terms of biological role, protein modifier that is covalently attached to lysine residues of substrate proteins, thereby targeting them for proteasomal degradation. The tagging system is termed pupylation. The polypeptide is Prokaryotic ubiquitin-like protein Pup (Rothia mucilaginosa (strain DY-18) (Stomatococcus mucilaginosus)).